A 287-amino-acid chain; its full sequence is Hydroxysteroid 11-beta-dehydrogenase 1-like protein (287 aa).

Positions 1–20 (MMKPFGKVLCAAGSLAVLLA) are cleaved as a signal peptide. NADP(+) contacts are provided by residues 41–67 (GASA…TARR), 92–93 (DM), and 119–121 (NHI). Residue serine 170 coordinates substrate. Tyrosine 183 acts as the Proton acceptor in catalysis. NADP(+)-binding positions include 183-187 (YSATK) and 216-222 (GLIDTDA).

Belongs to the short-chain dehydrogenases/reductases (SDR) family.

It localises to the secreted. The enzyme catalyses cortisone + NADPH + H(+) = cortisol + NADP(+). In terms of biological role, unidirectional NADP(+)-dependent cortisol dehydrogenase (in vitro). This Gallus gallus (Chicken) protein is Hydroxysteroid 11-beta-dehydrogenase 1-like protein (HSD11B1L).